We begin with the raw amino-acid sequence, 493 residues long: Ribose import ATP-binding protein RbsA (493 aa).

ABC transporter domains lie at 5 to 241 and 252 to 491; these read LKIS…VGRR and EKGE…AAAI. 37–44 provides a ligand contact to ATP; the sequence is GENGAGKS.

This sequence belongs to the ABC transporter superfamily. Ribose importer (TC 3.A.1.2.1) family. As to quaternary structure, the complex is composed of an ATP-binding protein (RbsA), two transmembrane proteins (RbsC) and a solute-binding protein (RbsB).

It is found in the cell inner membrane. It catalyses the reaction D-ribose(out) + ATP + H2O = D-ribose(in) + ADP + phosphate + H(+). Its function is as follows. Part of the ABC transporter complex RbsABC involved in ribose import. Responsible for energy coupling to the transport system. The chain is Ribose import ATP-binding protein RbsA from Haemophilus influenzae (strain ATCC 51907 / DSM 11121 / KW20 / Rd).